The primary structure comprises 211 residues: CASP-like protein 1B1 (211 aa).

The interval Met-1 to Ser-29 is disordered. At Met-1–Thr-55 the chain is on the cytoplasmic side. Over residues Thr-9–Thr-26 the composition is skewed to low complexity. The helical transmembrane segment at Ala-56–Val-76 threads the bilayer. Topologically, residues Gly-77–Ala-94 are extracellular. The chain crosses the membrane as a helical span at residues Phe-95 to Phe-115. At Arg-116–Arg-123 the chain is on the cytoplasmic side. The chain crosses the membrane as a helical span at residues Met-124 to Ala-144. At Ala-145–Arg-176 the chain is on the extracellular side. The chain crosses the membrane as a helical span at residues Gly-177–Leu-197. At Ser-198–Glu-211 the chain is on the cytoplasmic side.

It belongs to the Casparian strip membrane proteins (CASP) family. Homodimer and heterodimers.

The protein localises to the cell membrane. The chain is CASP-like protein 1B1 from Sorghum bicolor (Sorghum).